Here is a 271-residue protein sequence, read N- to C-terminus: Calretinin (271 aa).

EF-hand domains follow at residues 16–51 (LTAS…LEKA), 63–98 (NFGE…EENF), 107–142 (GSSA…LLKK), 151–186 (KLQE…QENF), 195–230 (LTSE…LYEK), and 235–270 (MNIQ…SEPP). Ca(2+) contacts are provided by aspartate 29, aspartate 31, asparagine 33, tyrosine 35, glutamate 40, aspartate 76, asparagine 78, aspartate 80, lysine 82, glutamate 87, aspartate 120, aspartate 122, serine 124, tyrosine 126, glutamate 131, aspartate 164, asparagine 166, aspartate 168, lysine 170, glutamate 175, aspartate 208, aspartate 210, serine 212, tyrosine 214, and glutamate 219. Tyrosine 214 carries the post-translational modification Phosphotyrosine.

Belongs to the calbindin family. In terms of tissue distribution, widely expressed in central nervous system. Expressed in type I unipolar brush cells of the cerebellum (at protein level).

It localises to the synapse. Its subcellular location is the cell projection. The protein localises to the dendrite. Functionally, calcium-binding protein involved in calcium homeostasis and signal transduction. It plays a critical role in buffering intracellular calcium levels and modulating calcium-dependent signaling pathways. Predominantly expressed in specific neuronal populations, influences synaptic plasticity and neuronal excitability, contributing to learning and memory. During embryonic development, it facilitates neuronal differentiation and maturation. The protein is Calretinin (Calb2) of Mus musculus (Mouse).